The following is a 422-amino-acid chain: Histidine--tRNA ligase (422 aa).

The protein belongs to the class-II aminoacyl-tRNA synthetase family. Homodimer.

Its subcellular location is the cytoplasm. It carries out the reaction tRNA(His) + L-histidine + ATP = L-histidyl-tRNA(His) + AMP + diphosphate + H(+). This is Histidine--tRNA ligase from Onion yellows phytoplasma (strain OY-M).